Consider the following 281-residue polypeptide: Bifunctional protein FolD (281 aa).

NADP(+) contacts are provided by residues glycine 164 to serine 166, isoleucine 189, and isoleucine 230.

The protein belongs to the tetrahydrofolate dehydrogenase/cyclohydrolase family. As to quaternary structure, homodimer.

It carries out the reaction (6R)-5,10-methylene-5,6,7,8-tetrahydrofolate + NADP(+) = (6R)-5,10-methenyltetrahydrofolate + NADPH. It catalyses the reaction (6R)-5,10-methenyltetrahydrofolate + H2O = (6R)-10-formyltetrahydrofolate + H(+). It participates in one-carbon metabolism; tetrahydrofolate interconversion. Its function is as follows. Catalyzes the oxidation of 5,10-methylenetetrahydrofolate to 5,10-methenyltetrahydrofolate and then the hydrolysis of 5,10-methenyltetrahydrofolate to 10-formyltetrahydrofolate. The sequence is that of Bifunctional protein FolD from Sulfurovum sp. (strain NBC37-1).